Here is a 784-residue protein sequence, read N- to C-terminus: MPRKASSTSDSRLKWRKWKRNPTASPSPSNRSSAAAAAADHSDDSDSAAVNEDDDSAVPEDADDETLAGAEDPVLDLREAEVLPSAEPVSAFPVATRRVVNRPHPSVLAVIAAERSACAGEGSAAVAAAPVLENISYGQQQVLSGVLPDHASLATDTDKPSTYVCTPPNLMEGHGVTKQFQGRLHVVPKHSDWFSPGIVHRLERQVVPQFFSGKSPGNTPEKYMLLRNKVIAKYLENPSKRLAFAECQGLVANTAELYDLSRIVRFLDTWGIINYLASGSVHRGLRMATSLLREEPTGELQLLTAPLKSIDGLILFDRPKCNLQAEDISSLASNSEVVDFDAGLAELDGKIRERLSESSCSYCLQPLTSLHYQSLKEADIALCSDCFHDARYITGHSSLDFQRIDGDNDRSENDGDSWTDQETLLLLEGIEKYNDNWNNIAEHVGTKSKAQCIYHFIRLPVEDGLLENIEVPDASVPFRAETNGYPHLDCNGSTSGNLPQKIPPDNQLPFINSSNPVMSLVGFLASAMGPRVAASCASAALSVLTVDDDSRVNSEGICSDSRGQGPHPNFRDHNGGVSSSISPEKVKHAAMCGLSAAATKAKLFADQEEREIQRLTATVINHQLKRLELKLKQFAEVETLLLKECEQVERIRQRIASDRVRIVSTRLASPGNSLPGGSTSTMSSNPMSMSPRPMGVPGSMPQSSMPAPFANNMQGHGHPQMAFLQQQQRQQMLSFGPRLPLSAIQTQPSPQTSNIMFNPGMPNSVTPNHHQLLRSSSGNNSSVG.

Over residues 1–10 (MPRKASSTSD) the composition is skewed to polar residues. The segment at 1 to 68 (MPRKASSTSD…PEDADDETLA (68 aa)) is disordered. Residues 24–39 (ASPSPSNRSSAAAAAA) are compositionally biased toward low complexity. Residues 43–66 (DDSDSAAVNEDDDSAVPEDADDET) show a composition bias toward acidic residues. The SWIRM domain maps to 185 to 284 (HVVPKHSDWF…YLASGSVHRG (100 aa)). Residues 355-409 (LSESSCSYCLQPLTSLHYQSLKEADIALCSDCFHDARYITGHSSLDFQRIDGDND) form a ZZ-type; degenerate zinc finger. Cys360, Cys363, Cys383, and Cys386 together coordinate Zn(2+). The SANT domain occupies 413-464 (NDGDSWTDQETLLLLEGIEKYNDNWNNIAEHVGTKSKAQCIYHFIRLPVEDG). 2 disordered regions span residues 667–702 (LASP…SMPQ) and 760–784 (GMPN…SSVG). Positions 675 to 695 (PGGSTSTMSSNPMSMSPRPMG) are enriched in low complexity.

Interacts with LFR. Interacts with NMCP1.

The protein resides in the nucleus. The protein localises to the nucleoplasm. In terms of biological role, component of a multiprotein complex equivalent of the SWI/SNF complex, an ATP-dependent chromatin-remodeling complex, which is required for the positive and negative regulation of gene expression of a large number of genes. It changes chromatin structure by altering DNA-histone contacts within a nucleosome, leading eventually to a change in nucleosome position, thus facilitating or repressing binding of gene-specific transcription factors. May be involved in positive response to drought stress and modulation of root growth through its interaction with NMCP1. The sequence is that of SWI/SNF complex subunit SWI3C homolog from Oryza sativa subsp. japonica (Rice).